The primary structure comprises 101 residues: Small ribosomal subunit protein uS14 (101 aa).

It belongs to the universal ribosomal protein uS14 family. Part of the 30S ribosomal subunit. Contacts proteins S3 and S10.

Its function is as follows. Binds 16S rRNA, required for the assembly of 30S particles and may also be responsible for determining the conformation of the 16S rRNA at the A site. In Pasteurella multocida (strain Pm70), this protein is Small ribosomal subunit protein uS14.